The chain runs to 1262 residues: Clustered mitochondria protein homolog (1262 aa).

Residues 1 to 47 form a disordered region; that stretch reads MTSGSELKAEVDAPVVNGKDELVHEEDNNDSGHSSINTPDASEDKQT. The segment covering 31–40 has biased composition (polar residues); the sequence is SGHSSINTPD. A Clu domain is found at 335–580; sequence AIELIEPFRV…RSMPPDVHYL (246 aa).

The protein belongs to the CLU family.

It localises to the cytoplasm. Its function is as follows. mRNA-binding protein involved in proper cytoplasmic distribution of mitochondria. This chain is Clustered mitochondria protein homolog, found in Caenorhabditis briggsae.